The primary structure comprises 210 residues: MSSAKELKKSVLAPVLDNNPIALQVLGVCSALAVTTKLETAFVMTLAVMFVTALSNFFVSLIRNHIPNSVRIIVQMAIIASLVIVVDQILKAYLYDISKQLSVFVGLIITNCIVMGRAEAFAMKSEPIPSFIDGIGNGLGYGFVLMTVGFFRELLGSGKLFGLEVLPLISNGGWYQPNGLMLLAPSAFFLIGFMIWAIRTFKPEQVEAKE.

A run of 5 helical transmembrane segments spans residues 42-62, 72-92, 103-123, 131-151, and 178-198; these read FVMT…VSLI, IIVQ…ILKA, VFVG…AFAM, FIDG…VGFF, and NGLM…IWAI.

It belongs to the NqrDE/RnfAE family. In terms of assembly, composed of six subunits; NqrA, NqrB, NqrC, NqrD, NqrE and NqrF.

It is found in the cell inner membrane. The catalysed reaction is a ubiquinone + n Na(+)(in) + NADH + H(+) = a ubiquinol + n Na(+)(out) + NAD(+). In terms of biological role, NQR complex catalyzes the reduction of ubiquinone-1 to ubiquinol by two successive reactions, coupled with the transport of Na(+) ions from the cytoplasm to the periplasm. NqrA to NqrE are probably involved in the second step, the conversion of ubisemiquinone to ubiquinol. This Vibrio cholerae serotype O1 (strain M66-2) protein is Na(+)-translocating NADH-quinone reductase subunit D.